Reading from the N-terminus, the 282-residue chain is Protease HtpX homolog (282 aa).

The next 2 helical transmembrane spans lie at Thr7–Gly26 and Gly30–Ser49. Position 131 (His131) interacts with Zn(2+). Glu132 is an active-site residue. His135 is a binding site for Zn(2+). Transmembrane regions (helical) follow at residues Ile141 to Ala161 and Leu183 to Ile203. Glu208 is a binding site for Zn(2+).

This sequence belongs to the peptidase M48B family. Requires Zn(2+) as cofactor.

Its subcellular location is the cell inner membrane. This is Protease HtpX homolog from Syntrophobacter fumaroxidans (strain DSM 10017 / MPOB).